The following is a 507-amino-acid chain: Fatty acid resistance protein FarB (507 aa).

14 helical membrane passes run 8-28 (GAAL…EVLD), 52-72 (WVIT…GFLA), 78-98 (VKLF…CGIA), 109-129 (ILQG…LMAS), 136-156 (MLAL…GPIL), 164-184 (WHWG…AWIT), 199-219 (PTDY…QMML), 233-253 (IITL…WELG), 274-294 (IATS…PLVL), 303-323 (AWAG…SPLI), 334-354 (LLVT…TDFY), 363-383 (IWPQ…LTTI), 399-419 (LSNF…STLW), and 478-498 (IFLA…LAKP).

This sequence belongs to the major facilitator superfamily. EmrB family. Probably part of a tripartite efflux system FarAB-MtrE, which is composed of an inner membrane transporter, FarB, a periplasmic membrane fusion protein, FarA, and an outer membrane component, MtrE.

It localises to the cell inner membrane. Mediates resistance to long-chained antibacterial fatty acids (FAs). Function is dependent on the MtrE outer membrane protein. This is Fatty acid resistance protein FarB from Neisseria gonorrhoeae.